Reading from the N-terminus, the 678-residue chain is Putative cyclic nucleotide-gated ion channel 15 (678 aa).

Residues 1 to 81 (MGYGNSRSVR…RGQTIRRWNK (81 aa)) are Cytoplasmic-facing. A helical transmembrane segment spans residues 82-102 (IFLIACLVSLFVDPLFFFLPV). Residues 103-115 (MRNEACITIGVRL) are Extracellular-facing. The helical transmembrane segment at 116 to 136 (EVVLTLIRSLADAFYIAQILI) threads the bilayer. Topologically, residues 137 to 170 (RFRTAYIAPPSRVFGRGELVIDSRKIAWRYLHKS) are cytoplasmic. Residues 171–191 (FWIHLVAALPLPQVLIWIIIP) traverse the membrane as a helical segment. Residues 192 to 203 (NLRGSPMTNTKN) are Extracellular-facing. The helical transmembrane segment at 204–224 (VLRFIIIFQYVPRMFLIFPLS) threads the bilayer. Residues 225-245 (RQIIKATGVVTETAWAGAAYN) are Cytoplasmic-facing. Residues 246-266 (LMLYMLASHVLGACWYLLAVE) form a helical membrane-spanning segment. Residues 267–364 (RQEACWRHAC…GQNLATSTYA (98 aa)) lie on the Extracellular side of the membrane. A helical membrane pass occupies residues 365 to 385 (GEILFAIIIATLGLVLFALLI). The Cytoplasmic segment spans residues 386 to 678 (GNMQTYLQST…KPVEPDFSSE (293 aa)). Residues 471-595 (LFDQ…TKQL) and Glu-542 contribute to the a nucleoside 3',5'-cyclic phosphate site. Residues 587 to 602 (FRRLHTKQLRHKFRFY) form a calmodulin-binding region. The IQ domain maps to 607-638 (RTWAACFIQAAWRRHRKRKYKTELRAKEEFHY). Over residues 656–668 (RSGSDSGMMSSIQ) the composition is skewed to polar residues. Residues 656–678 (RSGSDSGMMSSIQKPVEPDFSSE) form a disordered region.

The protein belongs to the cyclic nucleotide-gated cation channel (TC 1.A.1.5) family. Homotetramer or heterotetramer.

The protein resides in the cell membrane. Functionally, putative cyclic nucleotide-gated ion channel. This is Putative cyclic nucleotide-gated ion channel 15 (CNGC15) from Arabidopsis thaliana (Mouse-ear cress).